The chain runs to 811 residues: N-terminal acetyltransferase B complex subunit arm1 (811 aa).

It belongs to the MDM20/NAA25 family. As to quaternary structure, component of the N-terminal acetyltransferase B (NatB) complex.

The protein localises to the cytoplasm. In terms of biological role, non-catalytic subunit of the NatB N-terminal acetyltransferase, which catalyzes acetylation of the amino-terminal methionine residues of all proteins beginning with Met-Asp or Met-Glu and of some proteins beginning with Met-Asn or Met-Met. The polypeptide is N-terminal acetyltransferase B complex subunit arm1 (arm1) (Schizosaccharomyces pombe (strain 972 / ATCC 24843) (Fission yeast)).